Here is a 371-residue protein sequence, read N- to C-terminus: DNA replication and repair protein RecF (371 aa).

ATP is bound at residue 30–37 (GQNGSGKT).

It belongs to the RecF family.

Its subcellular location is the cytoplasm. Functionally, the RecF protein is involved in DNA metabolism; it is required for DNA replication and normal SOS inducibility. RecF binds preferentially to single-stranded, linear DNA. It also seems to bind ATP. The chain is DNA replication and repair protein RecF from Chlorobium phaeovibrioides (strain DSM 265 / 1930) (Prosthecochloris vibrioformis (strain DSM 265)).